The sequence spans 131 residues: MNKQRFLFAAKISGIHFLLSLTVAALLAGLIFFVWYPFPYQKIMGNFKLFFLISGIDVCCGPLLTFILSNPQKRLKECIIDFSLIIFIQLSAFIYGMYNIYLARPVAVVFELDSIRILSKGDILLDELPQA.

The sequence is that of Fimbrial assembly protein, serogroups C1 and C2 (fimB) from Dichelobacter nodosus (Bacteroides nodosus).